We begin with the raw amino-acid sequence, 428 residues long: Adenylosuccinate synthetase (428 aa).

Residues 12–18 and 40–42 each bind GTP; these read GDEGKGK and GHT. The Proton acceptor role is filled by aspartate 13. Mg(2+) is bound by residues aspartate 13 and glycine 40. Residues 13 to 16, 38 to 41, threonine 129, arginine 143, glutamine 224, threonine 239, and arginine 303 contribute to the IMP site; these read DEGK and NAGH. The active-site Proton donor is the histidine 41. 299 to 305 is a substrate binding site; the sequence is VTTGRIR. Residues arginine 305, 331–333, and 410–412 each bind GTP; these read KVD and AYG.

Belongs to the adenylosuccinate synthetase family. In terms of assembly, homodimer. Mg(2+) is required as a cofactor.

It localises to the cytoplasm. The catalysed reaction is IMP + L-aspartate + GTP = N(6)-(1,2-dicarboxyethyl)-AMP + GDP + phosphate + 2 H(+). It participates in purine metabolism; AMP biosynthesis via de novo pathway; AMP from IMP: step 1/2. Functionally, plays an important role in the de novo pathway of purine nucleotide biosynthesis. Catalyzes the first committed step in the biosynthesis of AMP from IMP. This chain is Adenylosuccinate synthetase, found in Francisella tularensis subsp. novicida (strain U112).